Consider the following 500-residue polypeptide: MSDQQLDPQALQQEENSLIALRKEKLAAERAKGNAFPNDFRRENYCEDLQKKYADKTKEELAEAAIPVKVAGRIMLNRGSFMVIQDMTGRIQVYVNRKTLSEETLASVKTWDMGDIIAAEGTLARSGKGDLYVEMTNVRLLTKSLRPLPDKHHGLTDTEQRYRQRYVDLIVNEEVRQTFRVRSQVIAHIRSFLMKRDFLEVETPMLQTIPGGAAAKPFETHHNALDMEMFLRIAPELYLKRLVVGGFEKVFEINRNFRNEGVSTRHNPEFTMLEFYQAYADYEDNMDLTEELFRELAQLVLGSTDVPYGDKVFHFGEPFARLSVFDSILKYNPELTADDLNDIDKARAIAKKAGAKVLGFEGLGKLQVMIFEELVEHKLEQPHFITQYPFEVSPLARRNDDNPNVTDRFELFIGGREIANAYSELNDAEDQAERFMAQVADKDAGDDEAMHYDADFVRALEYGMPPTAGEGIGIDRLVMLLTNSPSIRDVILFPHMRPQA.

Mg(2+)-binding residues include Glu410 and Glu417.

The protein belongs to the class-II aminoacyl-tRNA synthetase family. In terms of assembly, homodimer. Mg(2+) is required as a cofactor.

It localises to the cytoplasm. The enzyme catalyses tRNA(Lys) + L-lysine + ATP = L-lysyl-tRNA(Lys) + AMP + diphosphate. The sequence is that of Lysine--tRNA ligase from Pseudomonas fluorescens (strain ATCC BAA-477 / NRRL B-23932 / Pf-5).